We begin with the raw amino-acid sequence, 143 residues long: Large ribosomal subunit protein uL13 (143 aa).

It belongs to the universal ribosomal protein uL13 family. As to quaternary structure, part of the 50S ribosomal subunit.

Functionally, this protein is one of the early assembly proteins of the 50S ribosomal subunit, although it is not seen to bind rRNA by itself. It is important during the early stages of 50S assembly. The protein is Large ribosomal subunit protein uL13 of Geobacter sulfurreducens (strain ATCC 51573 / DSM 12127 / PCA).